A 308-amino-acid polypeptide reads, in one-letter code: uncharacterized protein (308 aa).

The 67-residue stretch at 15–81 (MRVDTGLARL…QNTPIDIEGM (67 aa)) folds into the S4 RNA-binding domain. The active site involves aspartate 139.

It belongs to the pseudouridine synthase RluA family.

The enzyme catalyses a uridine in RNA = a pseudouridine in RNA. This is an uncharacterized protein from Mycobacterium tuberculosis (strain CDC 1551 / Oshkosh).